Consider the following 258-residue polypeptide: DNA-directed RNA polymerase subunit Rpo3 (258 aa).

This sequence belongs to the archaeal Rpo3/eukaryotic RPB3 RNA polymerase subunit family. As to quaternary structure, part of the RNA polymerase complex.

It localises to the cytoplasm. The enzyme catalyses RNA(n) + a ribonucleoside 5'-triphosphate = RNA(n+1) + diphosphate. Its function is as follows. DNA-dependent RNA polymerase (RNAP) catalyzes the transcription of DNA into RNA using the four ribonucleoside triphosphates as substrates. This chain is DNA-directed RNA polymerase subunit Rpo3, found in Pyrobaculum calidifontis (strain DSM 21063 / JCM 11548 / VA1).